Consider the following 928-residue polypeptide: Protein NETWORKED 2B (928 aa).

Positions 10-90 (YSWWWASHIR…ERYDHLSTEL (81 aa)) constitute an NAB domain. The disordered stretch occupies residues 108 to 144 (PLVDDDDDDDDDNPKKPPKHLHLIPSGTNIPQVPEVP). Over residues 110–119 (VDDDDDDDDD) the composition is skewed to acidic residues. 2 coiled-coil regions span residues 207 to 309 (SYEQ…AKKA) and 360 to 445 (ALLK…VKMD). Disordered regions lie at residues 447–472 (DVEG…SISN) and 489–529 (KQSR…EERR). Over residues 457 to 468 (DIQEEDTVEDSD) the composition is skewed to acidic residues. Basic and acidic residues predominate over residues 489-506 (KQSRDQESMQEEKSETRD). Residues 547 to 574 (LLDEYSSVLRDYREVKRKLSEVEKKNRD) adopt a coiled-coil conformation. The disordered stretch occupies residues 620 to 651 (AESVSISHSSNSSFSMPPLPQRGDLKRASEQE). The segment covering 622 to 634 (SVSISHSSNSSFS) has biased composition (low complexity). Basic and acidic residues predominate over residues 642-651 (GDLKRASEQE).

It belongs to the NET family.

Plant-specific actin binding protein. May be part of a membrane-cytoskeletal adapter complex. This is Protein NETWORKED 2B from Arabidopsis thaliana (Mouse-ear cress).